A 273-amino-acid chain; its full sequence is (5R)-carbapenem-3-carboxylate synthase (273 aa).

Fe cation contacts are provided by histidine 101 and aspartate 103. Glycine 104 contributes to the substrate binding site. Residue threonine 130 coordinates 2-oxoglutarate. Residue histidine 251 participates in Fe cation binding. Positions 253, 263, and 267 each coordinate 2-oxoglutarate.

This sequence belongs to the TfdA dioxygenase family. In terms of assembly, homohexamer. Dimer of trimers. Requires Fe(2+) as cofactor.

The protein resides in the cytoplasm. The enzyme catalyses (3S,5S)-carbapenam-3-caboxylate + 2-oxoglutarate + O2 = (5R)-carbapenem-3-carboxylate + succinate + CO2 + H2O. With respect to regulation, inhibited by L-N-acetylproline and by D-N-acetylproline. Catalyzes the Fe(2+) and alpha-ketoglutarate-dependent conversion of (3S,5S)-carbapenam to (5R)-carbapenem, an essential step in carbapenem antibiotic biosynthesis. This is (5R)-carbapenem-3-carboxylate synthase (carC) from Pectobacterium carotovorum subsp. carotovorum (Erwinia carotovora subsp. carotovora).